The following is a 207-amino-acid chain: Protein FAM177A1 (207 aa).

Methionine 1 carries the N-acetylmethionine modification. Serine 65 bears the Phosphoserine mark. Residue threonine 66 is modified to Phosphothreonine. Residues isoleucine 131–glutamine 170 are a coiled coil. A disordered region spans residues glutamate 142 to threonine 176. Over residues glutamine 157–threonine 176 the composition is skewed to polar residues.

This sequence belongs to the FAM177 family.

The polypeptide is Protein FAM177A1 (Fam177a1) (Mus musculus (Mouse)).